Consider the following 943-residue polypeptide: Translation initiation factor IF-2 (943 aa).

The span at 99 to 113 (VKAAQTQAAPVQPEQ) shows a compositional bias: low complexity. Residues 99–354 (VKAAQTQAAP…LEPNQHAFQA (256 aa)) are disordered. Basic and acidic residues predominate over residues 117–141 (DAVKARAEAAARAEARAKAEAEAAK). Residues 145-172 (AKAGNKAKPAAQKPTEAKAETAPVAAET) show a composition bias toward low complexity. Residues 173–197 (KPAEPKEKAVKPKHERNGKGKDAKK) show a composition bias toward basic and acidic residues. Residues 200–215 (KPAAPAVPQPVVSAEE) are compositionally biased toward low complexity. The span at 216–250 (QAQRDEEARRAAALRAHQEALLKEKQERQARREAM) shows a compositional bias: basic and acidic residues. Positions 251–264 (KQQAEQQAKAAQEA) are enriched in low complexity. Basic and acidic residues-rich tracts occupy residues 295 to 308 (AKKE…DEGQ) and 319 to 335 (GGRD…ERVR). The tr-type G domain maps to 443–612 (PRPPVVTVMG…LLEAEVLELT (170 aa)). The interval 452 to 459 (GHVDHGKT) is G1. 452 to 459 (GHVDHGKT) provides a ligand contact to GTP. Positions 477–481 (GITQH) are G2. A G3 region spans residues 498-501 (DTPG). GTP contacts are provided by residues 498–502 (DTPGH) and 552–555 (NKID). The G4 stretch occupies residues 552 to 555 (NKID). Residues 588–590 (SAK) form a G5 region.

Belongs to the TRAFAC class translation factor GTPase superfamily. Classic translation factor GTPase family. IF-2 subfamily.

It is found in the cytoplasm. Functionally, one of the essential components for the initiation of protein synthesis. Protects formylmethionyl-tRNA from spontaneous hydrolysis and promotes its binding to the 30S ribosomal subunits. Also involved in the hydrolysis of GTP during the formation of the 70S ribosomal complex. The protein is Translation initiation factor IF-2 of Neisseria gonorrhoeae (strain ATCC 700825 / FA 1090).